The chain runs to 617 residues: V-type proton ATPase catalytic subunit A (617 aa).

257 to 264 (GAFGCGKT) is an ATP binding site.

The protein belongs to the ATPase alpha/beta chains family. As to quaternary structure, V-ATPase is a heteromultimeric enzyme composed of a peripheral catalytic V1 complex (components A to H) attached to an integral membrane V0 proton pore complex (components: a, c, c', c'', d, e, f and VOA1). Post-translationally, is a probable target for sumoylation.

Its subcellular location is the vacuole membrane. It catalyses the reaction ATP + H2O + 4 H(+)(in) = ADP + phosphate + 5 H(+)(out). In terms of biological role, catalytic subunit of the V1 complex of vacuolar(H+)-ATPase (V-ATPase), a multisubunit enzyme composed of a peripheral complex (V1) that hydrolyzes ATP and a membrane integral complex (V0) that translocates protons. V-ATPase is responsible for acidifying and maintaining the pH of intracellular compartments. Mediates oxidative stress response, filamentous growth, and plays an important role in virulence. This chain is V-type proton ATPase catalytic subunit A, found in Candida albicans (strain SC5314 / ATCC MYA-2876) (Yeast).